The primary structure comprises 922 residues: Dual serine/threonine and tyrosine protein kinase (922 aa).

Residues 645–899 form the Protein kinase domain; that stretch reads PKLGRELGRG…PLLGIVEPSL (255 aa). Residues 651–659 and Lys674 contribute to the ATP site; that span reads LGRGQYGVV. Residue Asp770 is the Proton acceptor of the active site.

Belongs to the protein kinase superfamily. Ser/Thr protein kinase family.

The protein resides in the cytoplasm. The protein localises to the cell membrane. It localises to the apical cell membrane. Its subcellular location is the basolateral cell membrane. It is found in the cell junction. The catalysed reaction is L-seryl-[protein] + ATP = O-phospho-L-seryl-[protein] + ADP + H(+). It catalyses the reaction L-threonyl-[protein] + ATP = O-phospho-L-threonyl-[protein] + ADP + H(+). It carries out the reaction L-tyrosyl-[protein] + ATP = O-phospho-L-tyrosyl-[protein] + ADP + H(+). In terms of biological role, may act as a positive regulator of ERK phosphorylation downstream of fibroblast growth factor-receptor activation. May induce both caspase-dependent apoptosis and caspase-independent cell death. May play a role in the embryonic development. This Tetraodon nigroviridis (Spotted green pufferfish) protein is Dual serine/threonine and tyrosine protein kinase.